Reading from the N-terminus, the 306-residue chain is Ribonuclease Z (306 aa).

Zn(2+)-binding residues include His-63, His-65, Asp-67, His-68, His-141, Asp-208, and His-266. The active-site Proton acceptor is the Asp-67.

It belongs to the RNase Z family. As to quaternary structure, homodimer. Zn(2+) serves as cofactor.

It carries out the reaction Endonucleolytic cleavage of RNA, removing extra 3' nucleotides from tRNA precursor, generating 3' termini of tRNAs. A 3'-hydroxy group is left at the tRNA terminus and a 5'-phosphoryl group is left at the trailer molecule.. Zinc phosphodiesterase, which displays some tRNA 3'-processing endonuclease activity. Probably involved in tRNA maturation, by removing a 3'-trailer from precursor tRNA. This Protochlamydia amoebophila (strain UWE25) protein is Ribonuclease Z.